The chain runs to 581 residues: Spastin (581 aa).

A compositionally biased stretch (basic residues) spans 1 to 12 (MSSPAGRRKKKG). A disordered region spans residues 1–39 (MSSPAGRRKKKGSGGASPAPARPPPPAAVPAPAAGPAPA). The interval 1–48 (MSSPAGRRKKKGSGGASPAPARPPPPAAVPAPAAGPAPAPGSPHKRNL) is required for nuclear localization. The Cytoplasmic segment spans residues 1–54 (MSSPAGRRKKKGSGGASPAPARPPPPAAVPAPAAGPAPAPGSPHKRNLYYFSYP). The segment at 1-78 (MSSPAGRRKK…LGLLFVWLCQ (78 aa)) is required for interaction with ATL1. Residues 1 to 191 (MSSPAGRRKK…LVMAKDRLQL (191 aa)) form a required for midbody localization region. Residues 1-265 (MSSPAGRRKK…GTSKPNRTNK (265 aa)) form a required for interaction with RTN1 region. The short motif at 4 to 11 (PAGRRKKK) is the Nuclear localization signal element. The span at 20 to 39 (PARPPPPAAVPAPAAGPAPA) shows a compositional bias: pro residues. The segment at 48-85 (LYYFSYPLVVGFALLRLLACHLGLLFVWLCQRFSRALM) is required for interaction with SSNA1 and microtubules. An intramembrane region (helical) is located at residues 55 to 75 (LVVGFALLRLLACHLGLLFVW). The Nuclear export signal motif lies at 57–65 (VGFALLRLL). Topologically, residues 76-581 (LCQRFSRALM…WNKDFGDTTV (506 aa)) are cytoplasmic. The disordered stretch occupies residues 90–111 (SSGTAPAPASPSTPAPGPGGEA). Residues 97–106 (PASPSTPAPG) show a composition bias toward pro residues. Residues 118 to 192 (HKQAFEYISI…VMAKDRLQLL (75 aa)) enclose the MIT domain. A sufficient for microtubule severing region spans residues 193–581 (ESGAVPKKKD…WNKDFGDTTV (389 aa)). The interval 195 to 277 (GAVPKKKDPL…TPTTAVRKKK (83 aa)) is disordered. A compositionally biased stretch (polar residues) spans 206 to 225 (HASNSLPRSKTVMKSGSTGL). S210 and S233 each carry phosphoserine. The tract at residues 235–293 (SGLSMVSGARPGSGPAATTHKGTSKPNRTNKPSTPTTAVRKKKDLKNFRNVDSNLANLI) is required for interaction with microtubules and microtubule severing. A compositionally biased stretch (polar residues) spans 254–271 (HKGTSKPNRTNKPSTPTT). T271 is subject to Phosphothreonine. A Nuclear localization signal motif is present at residues 274 to 277 (RKKK). 347–354 (GPPGNGKT) contacts ATP. S562 is subject to Phosphoserine.

This sequence belongs to the AAA ATPase family. Spastin subfamily. Homohexamer. Mostly monomeric, but assembles into hexameric structure for short periods of time. Oligomerization seems to be a prerequisite for catalytic activity. Binding to ATP in a cleft between two adjacent subunits stabilizes the homohexameric form. Binds to microtubules at least in part via the alpha-tubulin and beta-tubulin tails. The hexamer adopts a ring conformation through which microtubules pass prior to being severed. Does not interact strongly with tubulin heterodimers. Interacts (via MIT domain) with CHMP1B; the interaction is direct. Interacts with SSNA1. Interacts with ATL1. Interacts with RTN1. Interacts with ZFYVE27. Interacts with REEP1. Interacts (via MIT domain) with IST1.

Its subcellular location is the membrane. The protein resides in the endoplasmic reticulum. It is found in the midbody. It localises to the cytoplasm. The protein localises to the cytoskeleton. Its subcellular location is the microtubule organizing center. The protein resides in the centrosome. It is found in the perinuclear region. It localises to the nucleus. The protein localises to the spindle. Its subcellular location is the cell projection. The protein resides in the axon. The catalysed reaction is n ATP + n H2O + a microtubule = n ADP + n phosphate + (n+1) alpha/beta tubulin heterodimers.. Allosteric enzyme with a cooperative mechanism; at least two neighbor subunits influence each other strongly in spastin hexamers. Microtubule binding promotes cooperative interactions among spastin subunits. Its function is as follows. ATP-dependent microtubule severing protein that specifically recognizes and cuts microtubules that are polyglutamylated. Preferentially recognizes and acts on microtubules decorated with short polyglutamate tails: severing activity increases as the number of glutamates per tubulin rises from one to eight, but decreases beyond this glutamylation threshold. Severing activity is not dependent on tubulin acetylation or detyrosination. Microtubule severing promotes reorganization of cellular microtubule arrays and the release of microtubules from the centrosome following nucleation. It is critical for the biogenesis and maintenance of complex microtubule arrays in axons, spindles and cilia. SPAST is involved in abscission step of cytokinesis and nuclear envelope reassembly during anaphase in cooperation with the ESCRT-III complex. Recruited at the midbody, probably by IST1, and participates in membrane fission during abscission together with the ESCRT-III complex. Recruited to the nuclear membrane by IST1 and mediates microtubule severing, promoting nuclear envelope sealing and mitotic spindle disassembly during late anaphase. Required for membrane traffic from the endoplasmic reticulum (ER) to the Golgi and endosome recycling. Recruited by IST1 to endosomes and regulates early endosomal tubulation and recycling by mediating microtubule severing. Probably plays a role in axon growth and the formation of axonal branches. In Rattus norvegicus (Rat), this protein is Spastin.